The chain runs to 330 residues: Protein LEG1 homolog (330 aa).

An N-terminal signal peptide occupies residues 1–20 (MAFLPSWVCVLVGSFSASLA). N-linked (GlcNAc...) asparagine glycosylation is found at Asn-24 and Asn-69.

This sequence belongs to the LEG1 family. Detected in saliva and in hypomineralized dental enamel (at protein level).

The protein localises to the secreted. In terms of biological role, may be involved in early liver development. This is Protein LEG1 homolog from Homo sapiens (Human).